Consider the following 484-residue polypeptide: BAHD acyltransferase DCR (484 aa).

The active-site Proton acceptor is the His-168. The interval 211-233 (LDLTAPKDPNETSNGEDAANPTV) is disordered. The Proton acceptor role is filled by Asp-394. The disordered stretch occupies residues 452–484 (EEEEDDGKKLTNGNGHVNGNGNGYVNGNGNGFV). Positions 467–484 (HVNGNGNGYVNGNGNGFV) are enriched in gly residues.

Belongs to the plant acyltransferase family. In terms of tissue distribution, expressed in root caps and lateral root emerging sites, in trichomes, in epidermis in stems, sepals and anther filaments, and in pollen grains and torpedo stage seeds.

The protein resides in the cytoplasm. It is found in the cytosol. In terms of biological role, required for incorporation of 9(10),16-dihydroxy-hexadecanoic acid into cutin. This Arabidopsis thaliana (Mouse-ear cress) protein is BAHD acyltransferase DCR (DCR).